Reading from the N-terminus, the 902-residue chain is Cytosolic 10-formyltetrahydrofolate dehydrogenase (902 aa).

The hydrolase domain stretch occupies residues 1 to 310 (MKIAVIGQSL…PASQYYKTAD (310 aa)). 88–90 (QFI) contributes to the (6R)-10-formyltetrahydrofolate binding site. The Proton donor role is filled by H106. Residue D142 participates in (6R)-10-formyltetrahydrofolate binding. The Carrier domain maps to 318-395 (DEEKKFSEEI…EFIQMVVRRL (78 aa)). An O-(pantetheine 4'-phosphoryl)serine modification is found at S354. Positions 417 to 902 (TVKIPHQLFI…LKTKAVTIEY (486 aa)) are aldehyde dehydrogenase domain. Residues 571–573 (IPW), 597–600 (KPAQ), 630–635 (GSLIGQ), 650–651 (GS), and 673–674 (EL) each bind NADP(+). Residue E673 is the Proton acceptor of the active site. The active-site Proton donor is the C707. Residues K757 and 804 to 806 (ESF) contribute to the NADP(+) site.

It in the N-terminal section; belongs to the GART family. This sequence in the C-terminal section; belongs to the aldehyde dehydrogenase family. ALDH1L subfamily. As to quaternary structure, homotetramer. In terms of processing, phosphopantetheinylation at Ser-354 by AASDHPPT is required for the formyltetrahydrofolate dehydrogenase activity.

It localises to the cytoplasm. Its subcellular location is the cytosol. It carries out the reaction (6R)-10-formyltetrahydrofolate + NADP(+) + H2O = (6S)-5,6,7,8-tetrahydrofolate + CO2 + NADPH + H(+). In terms of biological role, cytosolic 10-formyltetrahydrofolate dehydrogenase that catalyzes the NADP(+)-dependent conversion of 10-formyltetrahydrofolate to tetrahydrofolate and carbon dioxide. May also have an NADP(+)-dependent aldehyde dehydrogenase activity towards formaldehyde, acetaldehyde, propionaldehyde, and benzaldehyde. Regulates reduced folate pools as well as glycine metabolism. The chain is Cytosolic 10-formyltetrahydrofolate dehydrogenase (aldh1l1) from Xenopus tropicalis (Western clawed frog).